A 110-amino-acid polypeptide reads, in one-letter code: Glycine cleavage system H-like protein (110 aa).

The Lipoyl-binding domain maps to 10–97; that stretch reads VEKVGDLYVF…PEENWLFKLD (88 aa). ADP-ribosyl aspartic acid is present on D27. N6-lipoyllysine is present on K56.

In terms of assembly, lipoylated GcvH-L directly interacts with SAV0325, which reverses the SirTM-mediated mono-ADP-ribosylation of GcvH-L, and with the oxidoreductase SAV0322. Is lipoylated on K-56 by LplA2 (SAV0327) and then mono-ADP-ribosylated, probably on D-27, by SirTM (SAV0326). The mono-ADP-ribosylation state of GcvH-L might regulate the availability of the lipoyl moiety for redox reactions; ADP-ribosylation would inhibit the interaction of the oxidoreductase with GcvH-L when it is not required, thus ADP-ribosylation of GcvH-L might be acting to keep the response 'off' under non-stress conditions.

Its function is as follows. May act as a carrier protein for the ROS scavenging lipoyl moiety and/or as a substrate for oxidoreductases such as SAV0322 and SAV0323. This is Glycine cleavage system H-like protein from Staphylococcus aureus (strain Mu50 / ATCC 700699).